Consider the following 180-residue polypeptide: Large ribosomal subunit protein uL6 (180 aa).

The protein belongs to the universal ribosomal protein uL6 family. Part of the 50S ribosomal subunit.

This protein binds to the 23S rRNA, and is important in its secondary structure. It is located near the subunit interface in the base of the L7/L12 stalk, and near the tRNA binding site of the peptidyltransferase center. This is Large ribosomal subunit protein uL6 from Anaeromyxobacter sp. (strain K).